The sequence spans 63 residues: Metallothionein-2 (63 aa).

Belongs to the metallothionein superfamily. Type 6 family.

Its function is as follows. This protein binds cations of several transition elements. This Caenorhabditis elegans protein is Metallothionein-2 (mtl-2).